Reading from the N-terminus, the 140-residue chain is Ribosome-binding factor A (140 aa).

This sequence belongs to the RbfA family. In terms of assembly, monomer. Binds 30S ribosomal subunits, but not 50S ribosomal subunits or 70S ribosomes.

Its subcellular location is the cytoplasm. In terms of biological role, one of several proteins that assist in the late maturation steps of the functional core of the 30S ribosomal subunit. Associates with free 30S ribosomal subunits (but not with 30S subunits that are part of 70S ribosomes or polysomes). Required for efficient processing of 16S rRNA. May interact with the 5'-terminal helix region of 16S rRNA. This chain is Ribosome-binding factor A, found in Cereibacter sphaeroides (strain ATCC 17025 / ATH 2.4.3) (Rhodobacter sphaeroides).